The following is a 254-amino-acid chain: Metallo-beta-lactamase type 2 (254 aa).

The N-terminal stretch at 1-27 is a signal peptide; that stretch reads MMKGWMKCGLAGAVVLMASFWGGSVRA. Position 99 (Asp-99) interacts with Zn(2+). Substrate is bound by residues Thr-135 and His-174. Cys-193 is a Zn(2+) binding site. Lys-196 and Asn-201 together coordinate substrate. Residue His-231 participates in Zn(2+) binding.

It belongs to the metallo-beta-lactamase superfamily. Class-B beta-lactamase family. Monomer. Zn(2+) serves as cofactor.

It localises to the periplasm. The catalysed reaction is a beta-lactam + H2O = a substituted beta-amino acid. Competitively inhibited by mercaptophosphonate and pyridine carboxylate derivatives. Also inhibited by the binding of a second zinc ion and by chelating agents such as EDTA. Its function is as follows. Confers resistance to the different beta-lactams antibiotics (penicillin, cephalosporin and carbapenem) via the hydrolysis of the beta-lactam ring. It is able to hydrolyze penicillin and imipenem, but is much less active against cephalothin, cefotaxime, meropenem and ceftazidime. The chain is Metallo-beta-lactamase type 2 from Aeromonas hydrophila.